The primary structure comprises 322 residues: Beta-1,3-galactosyltransferase bre-5 (322 aa).

The Cytoplasmic portion of the chain corresponds to 1–16 (MFLCVRILKRKYHELS). A helical; Signal-anchor for type II membrane protein transmembrane segment spans residues 17 to 37 (SFQKLLIFTITIFLLWVLGVV). Over 38–322 (DKFRETSFGD…YEYSQLNGFE (285 aa)) the chain is Lumenal. N150 carries an N-linked (GlcNAc...) asparagine glycan.

Belongs to the glycosyltransferase 31 family. In terms of tissue distribution, expressed in the gut.

The protein resides in the golgi apparatus membrane. It functions in the pathway protein modification; protein glycosylation. In terms of biological role, transfers N-acetylgalactosamine onto mannose groups of carbohydrate substrates. Required for susceptibility to pore-forming crystal toxins in conjunction with bre-1, bre-2, bre-3, and bre-4. Involved in resistance to the nematotoxic C.cinerea galectin Cgl2. The chain is Beta-1,3-galactosyltransferase bre-5 from Caenorhabditis elegans.